Reading from the N-terminus, the 729-residue chain is Cullin-6 (729 aa).

One can recognise a Cullin neddylation domain in the interval aspartate 659–asparagine 720. A Glycyl lysine isopeptide (Lys-Gly) (interchain with G-Cter in NEDD8) cross-link involves residue lysine 673.

The protein belongs to the cullin family. Probably interacts with skr-3. In terms of processing, neddylated; which enhances the ubiquitination activity of SCF-like complex.

Its function is as follows. Probable core component of cullin-based SCF-like E3 ubiquitin-protein ligase complexes which mediate the ubiquitination and subsequent proteasomal degradation of target proteins. In Caenorhabditis elegans, this protein is Cullin-6 (cul-6).